Reading from the N-terminus, the 611-residue chain is Chaperone protein DnaK (611 aa).

T173 is subject to Phosphothreonine; by autocatalysis. The segment covering 579-592 (AAGQAEGAQGAQDA) has biased composition (low complexity). The disordered stretch occupies residues 579 to 598 (AAGQAEGAQGAQDAGAKKDN).

Belongs to the heat shock protein 70 family.

In terms of biological role, acts as a chaperone. This Bacillus cereus (strain AH187) protein is Chaperone protein DnaK.